Reading from the N-terminus, the 604-residue chain is DNA polymerase alpha subunit B (604 aa).

Positions 109–171 (ETLLNSYTTP…KYSSRSNRGE (63 aa)) are disordered. A compositionally biased stretch (polar residues) spans 113–141 (NSYTTPSKGSQKRTITTPETPLTKRSVSA). Phosphothreonine occurs at positions 129 and 132. Phosphoserine is present on residues Ser-143, Ser-149, Ser-154, and Ser-156. The span at 143 to 160 (SPHQLLSPSSFSPSATPP) shows a compositional bias: low complexity.

It belongs to the DNA polymerase alpha subunit B family. In terms of assembly, component of the alpha DNA polymerase complex (also known as the alpha DNA polymerase-primase complex) consisting of four subunits: the catalytic subunit POLA1, the regulatory subunit POLA2, and the primase complex subunits PRIM1 and PRIM2 respectively. Within the complex, POLA1 directly interacts with PRIM2. In terms of processing, phosphorylated in a cell cycle-dependent manner, in G2/M phase.

The protein resides in the nucleus. Accessory subunit of the DNA polymerase alpha complex (also known as the alpha DNA polymerase-primase complex) which plays an essential role in the initiation of DNA synthesis. During the S phase of the cell cycle, the DNA polymerase alpha complex (composed of a catalytic subunit POLA1, an accessory subunit POLA2 and two primase subunits, the catalytic subunit PRIM1 and the regulatory subunit PRIM2) is recruited to DNA at the replicative forks via direct interactions with MCM10 and WDHD1. The primase subunit of the polymerase alpha complex initiates DNA synthesis by oligomerising short RNA primers on both leading and lagging strands. These primers are initially extended by the polymerase alpha catalytic subunit and subsequently transferred to polymerase delta and polymerase epsilon for processive synthesis on the lagging and leading strand, respectively. In Bos taurus (Bovine), this protein is DNA polymerase alpha subunit B (POLA2).